The chain runs to 454 residues: tRNA modification GTPase MnmE (454 aa).

Arg-23, Glu-80, and Lys-120 together coordinate (6S)-5-formyl-5,6,7,8-tetrahydrofolate. The 162-residue stretch at 216–377 (GMKVVIAGRP…LRDHLKQSMG (162 aa)) folds into the TrmE-type G domain. Asn-226 contacts K(+). Residues 226 to 231 (NAGKSS), 245 to 251 (TDIAGTT), 270 to 273 (DTAG), 335 to 338 (NKAD), and 358 to 360 (SAR) each bind GTP. Ser-230 is a Mg(2+) binding site. Positions 245, 247, and 250 each coordinate K(+). Position 251 (Thr-251) interacts with Mg(2+). Position 454 (Lys-454) interacts with (6S)-5-formyl-5,6,7,8-tetrahydrofolate.

The protein belongs to the TRAFAC class TrmE-Era-EngA-EngB-Septin-like GTPase superfamily. TrmE GTPase family. In terms of assembly, homodimer. Heterotetramer of two MnmE and two MnmG subunits. The cofactor is K(+).

Its subcellular location is the cytoplasm. Its function is as follows. Exhibits a very high intrinsic GTPase hydrolysis rate. Involved in the addition of a carboxymethylaminomethyl (cmnm) group at the wobble position (U34) of certain tRNAs, forming tRNA-cmnm(5)s(2)U34. This Serratia proteamaculans (strain 568) protein is tRNA modification GTPase MnmE.